The chain runs to 89 residues: UPF0297 protein lp_2275 (89 aa).

It belongs to the UPF0297 family.

The sequence is that of UPF0297 protein lp_2275 from Lactiplantibacillus plantarum (strain ATCC BAA-793 / NCIMB 8826 / WCFS1) (Lactobacillus plantarum).